The following is a 198-amino-acid chain: Recombination protein RecR (198 aa).

The C4-type zinc-finger motif lies at 57 to 72 (CEKCNTFTEAQICEVC). Residues 80-175 (TLLCVVETPA…AVTRLARGVP (96 aa)) enclose the Toprim domain.

This sequence belongs to the RecR family.

Its function is as follows. May play a role in DNA repair. It seems to be involved in an RecBC-independent recombinational process of DNA repair. It may act with RecF and RecO. The sequence is that of Recombination protein RecR from Burkholderia cenocepacia (strain HI2424).